A 480-amino-acid polypeptide reads, in one-letter code: CASP8 and FADD-like apoptosis regulator (480 aa).

2 consecutive DED domains span residues 1 to 73 (MSAE…RILK) and 92 to 170 (DYRV…KIQK). The segment at 1–195 (MSAEVIHQVE…LQAAIQKSFK (195 aa)) is interaction with CASP8. An interaction with FADD region spans residues 1–227 (MSAEVIHQVE…GTQQEPVKKS (227 aa)). An interaction with CASP8 propeptide region spans residues 1–305 (MSAEVIHQVE…FACMPEHRDY (305 aa)). Positions 1–435 (MSAEVIHQVE…CLSQKLRQER (435 aa)) are not proteolytically processed and involved in apoptosis inhibition. Residues 192–435 (KSFKDPSNNF…CLSQKLRQER (244 aa)) form an interaction with CASP3 region. The interval 192-480 (KSFKDPSNNF…LRKKLIPSYT (289 aa)) is interaction with TRAF1 and TRAF2. The segment at 217-480 (LGTQQEPVKK…LRKKLIPSYT (264 aa)) is interaction with CASP8 subunits p18 and p10. Positions 263–358 (ETELLRDTFT…AGKPKIFFIQ (96 aa)) are caspase. Positions 370 to 480 (SSLLEVDGPA…LRKKLIPSYT (111 aa)) are interaction with CASP8.

This sequence belongs to the peptidase C14A family. TNFRSF6 stimulation triggers recruitment to the death-inducing signaling complex (DISC) formed by TNFRSF6, FADD and CASP8. A proteolytic fragment (p43) stays associated with the DISC. Interacts with RIPK1. In terms of processing, proteolytically processed by CASP8 generating subunit p43 and p12.

In terms of biological role, apoptosis regulator protein which may function as a crucial link between cell survival and cell death pathways in mammalian cells. Acts as an inhibitor of TNFRSF6 mediated apoptosis. A proteolytic fragment (p43) is likely retained in the death-inducing signaling complex (DISC) thereby blocking further recruitment and processing of caspase-8 at the complex. Full length and shorter isoforms have been shown either to induce apoptosis or to reduce TNFRSF-triggered apoptosis. Lacks enzymatic (caspase) activity. The polypeptide is CASP8 and FADD-like apoptosis regulator (CFLAR) (Pongo abelii (Sumatran orangutan)).